A 335-amino-acid chain; its full sequence is Glycerol-3-phosphate dehydrogenase [NAD(P)+] (335 aa).

Residues Trp12 and Lys106 each coordinate NADPH. 3 residues coordinate sn-glycerol 3-phosphate: Lys106, Gly136, and Ser138. Ala140 contacts NADPH. Residues Lys191, Asp244, Ser254, Arg255, and Asn256 each coordinate sn-glycerol 3-phosphate. Catalysis depends on Lys191, which acts as the Proton acceptor. Residue Arg255 coordinates NADPH. Residues Val279 and Glu281 each coordinate NADPH.

This sequence belongs to the NAD-dependent glycerol-3-phosphate dehydrogenase family.

The protein resides in the cytoplasm. It catalyses the reaction sn-glycerol 3-phosphate + NAD(+) = dihydroxyacetone phosphate + NADH + H(+). It carries out the reaction sn-glycerol 3-phosphate + NADP(+) = dihydroxyacetone phosphate + NADPH + H(+). It participates in membrane lipid metabolism; glycerophospholipid metabolism. Catalyzes the reduction of the glycolytic intermediate dihydroxyacetone phosphate (DHAP) to sn-glycerol 3-phosphate (G3P), the key precursor for phospholipid synthesis. This Fusobacterium nucleatum subsp. nucleatum (strain ATCC 25586 / DSM 15643 / BCRC 10681 / CIP 101130 / JCM 8532 / KCTC 2640 / LMG 13131 / VPI 4355) protein is Glycerol-3-phosphate dehydrogenase [NAD(P)+].